The following is a 74-amino-acid chain: Translation initiation factor IF-1 (74 aa).

Positions 1 to 73 (MSNKEDIIKM…TKGRIVYRKK (73 aa)) constitute an S1-like domain.

It belongs to the IF-1 family. As to quaternary structure, component of the 30S ribosomal translation pre-initiation complex which assembles on the 30S ribosome in the order IF-2 and IF-3, IF-1 and N-formylmethionyl-tRNA(fMet); mRNA recruitment can occur at any time during PIC assembly.

The protein localises to the cytoplasm. Its function is as follows. One of the essential components for the initiation of protein synthesis. Stabilizes the binding of IF-2 and IF-3 on the 30S subunit to which N-formylmethionyl-tRNA(fMet) subsequently binds. Helps modulate mRNA selection, yielding the 30S pre-initiation complex (PIC). Upon addition of the 50S ribosomal subunit IF-1, IF-2 and IF-3 are released leaving the mature 70S translation initiation complex. The sequence is that of Translation initiation factor IF-1 from Thermosipho melanesiensis (strain DSM 12029 / CIP 104789 / BI429).